The following is a 184-amino-acid chain: Holliday junction branch migration complex subunit RuvA (184 aa).

Residues 1–62 (MIVGLVGEVL…EDSESLYGFV (62 aa)) are domain I. Positions 63–134 (DINEKKMFDR…ELGEFDISES (72 aa)) are domain II. A flexible linker region spans residues 134-135 (SN). The interval 136–184 (VTSSAFQEASMALQSLGFKKEQIQKALQECTATDTASLVKEALKKIQKL) is domain III.

The protein belongs to the RuvA family. Homotetramer. Forms an RuvA(8)-RuvB(12)-Holliday junction (HJ) complex. HJ DNA is sandwiched between 2 RuvA tetramers; dsDNA enters through RuvA and exits via RuvB. An RuvB hexamer assembles on each DNA strand where it exits the tetramer. Each RuvB hexamer is contacted by two RuvA subunits (via domain III) on 2 adjacent RuvB subunits; this complex drives branch migration. In the full resolvosome a probable DNA-RuvA(4)-RuvB(12)-RuvC(2) complex forms which resolves the HJ.

It is found in the cytoplasm. The RuvA-RuvB-RuvC complex processes Holliday junction (HJ) DNA during genetic recombination and DNA repair, while the RuvA-RuvB complex plays an important role in the rescue of blocked DNA replication forks via replication fork reversal (RFR). RuvA specifically binds to HJ cruciform DNA, conferring on it an open structure. The RuvB hexamer acts as an ATP-dependent pump, pulling dsDNA into and through the RuvAB complex. HJ branch migration allows RuvC to scan DNA until it finds its consensus sequence, where it cleaves and resolves the cruciform DNA. This is Holliday junction branch migration complex subunit RuvA from Nitratiruptor sp. (strain SB155-2).